The following is a 368-amino-acid chain: Putative phospho-2-dehydro-3-deoxyheptonate aldolase (368 aa).

It belongs to the class-I DAHP synthase family.

The enzyme catalyses D-erythrose 4-phosphate + phosphoenolpyruvate + H2O = 7-phospho-2-dehydro-3-deoxy-D-arabino-heptonate + phosphate. It participates in metabolic intermediate biosynthesis; chorismate biosynthesis; chorismate from D-erythrose 4-phosphate and phosphoenolpyruvate: step 1/7. Functionally, stereospecific condensation of phosphoenolpyruvate (PEP) and D-erythrose-4-phosphate (E4P) giving rise to 3-deoxy-D-arabino-heptulosonate-7-phosphate (DAHP). This chain is Putative phospho-2-dehydro-3-deoxyheptonate aldolase, found in Schizosaccharomyces pombe (strain 972 / ATCC 24843) (Fission yeast).